A 201-amino-acid polypeptide reads, in one-letter code: MEWVWALVLLAALGGGSAERDCRVSSFRVKENFDKARFSGLWYAIAKKDPEGLFLQDNIIAEFSVDEKGHMSATAKGRVRLLSNWEVCADMVGTFTDTEDPAKFKMKYWGVASFLQRGNDDHWIIDTDYDTFALQYSCRLQNLDGTCADSYSFVFSRDPNGLTPETRRLVRQRQEELCLERQYRWIEHNGYCQSRPSRNSL.

Positions Met-1–Ala-18 are cleaved as a signal peptide. 3 disulfide bridges follow: Cys-22–Cys-178, Cys-88–Cys-192, and Cys-138–Cys-147. Position 116 (Gln-116) interacts with substrate. Position 139 is an omega-N-methylarginine (Arg-139).

The protein belongs to the calycin superfamily. Lipocalin family. In terms of assembly, interacts with TTR. Interaction with TTR prevents its loss by filtration through the kidney glomeruli. Interacts with STRA6. As to expression, detected in blood plasma (at protein level).

It localises to the secreted. In terms of biological role, retinol-binding protein that mediates retinol transport in blood plasma. Delivers retinol from the liver stores to the peripheral tissues. Transfers the bound all-trans retinol to STRA6, that then facilitates retinol transport across the cell membrane. In Rattus norvegicus (Rat), this protein is Retinol-binding protein 4 (Rbp4).